Here is a 471-residue protein sequence, read N- to C-terminus: Protoheme IX farnesyltransferase, mitochondrial (471 aa).

A mitochondrion-targeting transit peptide spans 1–60 (MLLSNVAVNRTVVHTQLVSGSRSALHALSRTSHSVPVTHTHQRRHIFSHKRRLSSSTLAI). Helical transmembrane passes span 188–208 (AVSL…SGSA), 247–267 (ITGT…VAIL), 287–307 (IINT…GWAA), 312–332 (LLHP…FPHF), 368–388 (LLMF…WWFV), and 430–450 (KLFW…MIHK).

The protein belongs to the UbiA prenyltransferase family.

It is found in the mitochondrion membrane. The enzyme catalyses heme b + (2E,6E)-farnesyl diphosphate + H2O = Fe(II)-heme o + diphosphate. In terms of biological role, converts protoheme IX and farnesyl diphosphate to heme O. This is Protoheme IX farnesyltransferase, mitochondrial (COX10) from Yarrowia lipolytica (strain CLIB 122 / E 150) (Yeast).